Reading from the N-terminus, the 145-residue chain is 3-hydroxyacyl-[acyl-carrier-protein] dehydratase FabZ (145 aa).

Residue H49 is part of the active site.

This sequence belongs to the thioester dehydratase family. FabZ subfamily.

The protein localises to the cytoplasm. It catalyses the reaction a (3R)-hydroxyacyl-[ACP] = a (2E)-enoyl-[ACP] + H2O. Its function is as follows. Involved in unsaturated fatty acids biosynthesis. Catalyzes the dehydration of short chain beta-hydroxyacyl-ACPs and long chain saturated and unsaturated beta-hydroxyacyl-ACPs. The sequence is that of 3-hydroxyacyl-[acyl-carrier-protein] dehydratase FabZ from Rickettsia akari (strain Hartford).